The chain runs to 335 residues: MAVEAHHLNPLFSSNREMIHPVEASGVVYNTQMRYGTVPTFNPTVECQTSLFNPIYNISPVDRLVHQSMKPTIQSVDSSLTFNSDNNVDFLRPVSSRKRSREESVVLNPSAYMQIQKNPTDPLMFLGQDLSSNVQQHHFDIDRLISNHVERMRMEIEEKRKTQGRRIVEAVEQGLMKTLRAKDDEINHIGKLNLFLEEKVKSLCVENQIWRDVAQSNEATVNALRSNLQQVLAAVERNRWEEPPTVADDAQSCCGSNDEGDSEEERWKLAGEAQDTKKMCRVGMSMCRSCGKGEASVLLLPCRHMCLCSVCGSSLNTCPICKSPKTASLHVNLSS.

The tract at residues 196–232 (LEEKVKSLCVENQIWRDVAQSNEATVNALRSNLQQVL) is WRD domain. An RING-type zinc finger spans residues 287–322 (CRSCGKGEASVLLLPCRHMCLCSVCGSSLNTCPICK).

Interacts with the DELLA proteins GAI, RGA, RGL1, RGL2 and RGL3.

The catalysed reaction is S-ubiquitinyl-[E2 ubiquitin-conjugating enzyme]-L-cysteine + [acceptor protein]-L-lysine = [E2 ubiquitin-conjugating enzyme]-L-cysteine + N(6)-ubiquitinyl-[acceptor protein]-L-lysine.. Its pathway is protein degradation; proteasomal ubiquitin-dependent pathway. In terms of biological role, probable E3 ubiquitin-protein ligase. Has no effect on the stability of the DELLA proteins. The polypeptide is Probable BOI-related E3 ubiquitin-protein ligase 3 (BRG3) (Arabidopsis thaliana (Mouse-ear cress)).